Reading from the N-terminus, the 294-residue chain is Acetylglutamate kinase (294 aa).

Substrate-binding positions include 63–64 (GG), Arg85, and Asn188.

The protein belongs to the acetylglutamate kinase family. ArgB subfamily.

It localises to the cytoplasm. It carries out the reaction N-acetyl-L-glutamate + ATP = N-acetyl-L-glutamyl 5-phosphate + ADP. It participates in amino-acid biosynthesis; L-arginine biosynthesis; N(2)-acetyl-L-ornithine from L-glutamate: step 2/4. Functionally, catalyzes the ATP-dependent phosphorylation of N-acetyl-L-glutamate. The protein is Acetylglutamate kinase of Methanococcus maripaludis (strain DSM 14266 / JCM 13030 / NBRC 101832 / S2 / LL).